A 471-amino-acid polypeptide reads, in one-letter code: Cytochrome P450 monooxygenase afvE (471 aa).

Residues 265-285 (IIFYHFELSTPVAFFIIFAVY) form a helical membrane-spanning segment. Cys-410 is a binding site for heme.

This sequence belongs to the cytochrome P450 family. Heme is required as a cofactor.

The protein localises to the membrane. It participates in secondary metabolite biosynthesis. Functionally, cytochrome P450 monooxygenase; part of the gene cluster that mediates the biosynthesis of aflavarin, a bicoumarin that exhibits anti-insectan activity against the fungivorous beetle C.hemipterus. This chain is Cytochrome P450 monooxygenase afvE, found in Aspergillus flavus (strain ATCC 200026 / FGSC A1120 / IAM 13836 / NRRL 3357 / JCM 12722 / SRRC 167).